Consider the following 245-residue polypeptide: Aliphatic sulfonates import ATP-binding protein SsuB 2 (245 aa).

An ABC transporter domain is found at 15-229 (VAVRGLSRAF…DVADPEFARI (215 aa)). 47-54 (GASGCGKS) provides a ligand contact to ATP.

This sequence belongs to the ABC transporter superfamily. Aliphatic sulfonates importer (TC 3.A.1.17.2) family. The complex is composed of two ATP-binding proteins (SsuB), two transmembrane proteins (SsuC) and a solute-binding protein (SsuA).

The protein resides in the cell inner membrane. The catalysed reaction is ATP + H2O + aliphatic sulfonate-[sulfonate-binding protein]Side 1 = ADP + phosphate + aliphatic sulfonateSide 2 + [sulfonate-binding protein]Side 1.. Its function is as follows. Part of the ABC transporter complex SsuABC involved in aliphatic sulfonates import. Responsible for energy coupling to the transport system. The protein is Aliphatic sulfonates import ATP-binding protein SsuB 2 of Paracoccus denitrificans (strain Pd 1222).